A 503-amino-acid chain; its full sequence is Probable cytochrome P450 6a19 (503 aa).

Cys445 is a binding site for heme.

Belongs to the cytochrome P450 family. It depends on heme as a cofactor.

Its subcellular location is the endoplasmic reticulum membrane. The protein localises to the microsome membrane. In terms of biological role, may be involved in the metabolism of insect hormones and in the breakdown of synthetic insecticides. The sequence is that of Probable cytochrome P450 6a19 (Cyp6a19) from Drosophila melanogaster (Fruit fly).